The sequence spans 470 residues: MQQCNLAVDIGASSGRVIAGYLQNGKLQLEEVHRFDNKLIDLNNYFCWDIDRIYQEILMGIKSAVDNGYQPISLGIDTWAVDFVLLDENDMRLTDAVSYRDPRTDGMMEEVFSQISKERLYLETGIQFQKFNTMYQLQALKNSNPDLIEKATSFLMIPDYLNFLLTGKKVNEYTNATTTQLVNAFTKKWDIDLIEQLGFNSNMFMDIQPPESVIGNLRPELQEELGVDFNVILPATHDTGSAVVAVPEQENSIYISSGTWSLIGVENHFPICTTKALDYNFTNEGGADYRYRFLKNIMGLWMIQEVKRNFNDEFEFADFAAMAKGESFKSIVDVDDDRFLKPENMIEEIKAYCKETNQAIPQSPSEVAKCVFNSLAVSYQQAISQIEEIYEIDFPTIYVIGGGSKNEMLNQLIADTTGKTVIAGLSEATAIGNLIVQMMAIDQIDDMQQARQIIKHSFDLYTYAKVTMEG.

ATP is bound at residue 12-16; it reads ASSGR. Substrate is bound by residues Ala80 and 237-239; that span reads HDT. Asp238 serves as the catalytic Proton acceptor. Thr259 contacts ATP. Asn296 provides a ligand contact to substrate. Gln304 contacts ATP. An intrachain disulfide couples Cys353 to Cys370. Position 402 (Gly402) interacts with ATP.

The protein belongs to the rhamnulokinase family. Requires Mg(2+) as cofactor.

The catalysed reaction is L-rhamnulose + ATP = L-rhamnulose 1-phosphate + ADP + H(+). The protein operates within carbohydrate degradation; L-rhamnose degradation; glycerone phosphate from L-rhamnose: step 2/3. Its function is as follows. Involved in the catabolism of L-rhamnose (6-deoxy-L-mannose). Catalyzes the transfer of the gamma-phosphate group from ATP to the 1-hydroxyl group of L-rhamnulose to yield L-rhamnulose 1-phosphate. The polypeptide is Rhamnulokinase (Oceanobacillus iheyensis (strain DSM 14371 / CIP 107618 / JCM 11309 / KCTC 3954 / HTE831)).